The chain runs to 185 residues: UPF0397 protein AYWB_013 (185 aa).

5 helical membrane passes run I13–F33, A42–I62, F69–I89, I109–P129, and F148–I168.

Belongs to the UPF0397 family.

The protein resides in the cell membrane. The protein is UPF0397 protein AYWB_013 of Aster yellows witches'-broom phytoplasma (strain AYWB).